The primary structure comprises 950 residues: Defective chorion protein, FC106 isoform (950 aa).

The first 19 residues, 1 to 19 (MRLFSLLPLLALLVVQAAG), serve as a signal peptide directing secretion. Disordered stretches follow at residues 23–60 (VTSD…PSIN), 184–212 (APAP…PDAP), and 268–294 (PAQP…EDPY). Over residues 32-41 (AGSTTNSTTD) the composition is skewed to polar residues. The segment covering 268 to 280 (PAQPAAAGTDAQA) has biased composition (low complexity). Tandem repeats lie at residues 493 to 518 (QNPM…QQIQ), 519 to 544 (QNPM…QQIQ), 545 to 570 (QNPM…QQIQ), 571 to 596 (QNPM…QQIQ), and 597 to 622 (QNPM…QQIQ). The 12 X 26 AA approximate tandem repeats, Glu, Met-rich stretch occupies residues 493 to 788 (QNPMMMQQRQ…IQQQQRQMMQ (296 aa)). One copy of the 6; approximate repeat lies at 623–652 (QNPMMMQQRQWSEEQAKIQHDQQMAQQMAQ). One copy of the 7; approximate repeat lies at 653–680 (QGLMMTEQRQRQWSEDQAKIQQAQQMAQ). The stretch at 681 to 696 (QTPMMMPQMQQRQWTE) is one 8; approximate repeat. The 9; approximate repeat unit spans residues 697 to 720 (DPQMVQQMQQRQWAEDQTRMQMAQ). Residues 721-733 (QNPMMQQQRQMAE) form a 10; approximate repeat. The 11; approximate repeat unit spans residues 734–758 (NPQMMQQRQWSEEQTKIEQAQQMAQ). The stretch at 759 to 788 (QNQMMMQQMQQRQWSEDQAQIQQQQRQMMQ) is one 12; approximate repeat. A disordered region spans residues 843 to 875 (GPQMPENEGTARHKVDALGVGGNKRKKSKSKSA).

Post-translationally, proteolytic cleavage of isoform FC106 generates 2 further products, S80 and S60.

The protein localises to the secreted. Its function is as follows. Required for proper assembly of the eggshell. The polypeptide is Defective chorion protein, FC106 isoform (Drosophila melanogaster (Fruit fly)).